Reading from the N-terminus, the 254-residue chain is Large ribosomal subunit protein uL15m (254 aa).

A mitochondrion-targeting transit peptide spans 1 to 78 (MFNILSRVCR…GSGQRRGRRI (78 aa)). Residues 44–104 (NYQSKKRVGR…KVGHSTGHLK (61 aa)) form a disordered region. A compositionally biased stretch (basic residues) spans 64 to 79 (GRGHKGSGQRRGRRIK).

The protein belongs to the universal ribosomal protein uL15 family. As to quaternary structure, component of the mitochondrial large ribosomal subunit (mt-LSU). Mature yeast 74S mitochondrial ribosomes consist of a small (37S) and a large (54S) subunit. The 37S small subunit contains a 15S ribosomal RNA (15S mt-rRNA) and at least 32 different proteins. The 54S large subunit contains a 21S rRNA (21S mt-rRNA) and at least 45 different proteins.

Its subcellular location is the mitochondrion. Component of the mitochondrial ribosome (mitoribosome), a dedicated translation machinery responsible for the synthesis of mitochondrial genome-encoded proteins, including at least some of the essential transmembrane subunits of the mitochondrial respiratory chain. The mitoribosomes are attached to the mitochondrial inner membrane and translation products are cotranslationally integrated into the membrane. This chain is Large ribosomal subunit protein uL15m (mrpl10), found in Schizosaccharomyces pombe (strain 972 / ATCC 24843) (Fission yeast).